The primary structure comprises 700 residues: ATP-dependent zinc metalloprotease FtsH (700 aa).

Residues 1-20 (MSSDNGSGRQGGDRGGSTGY) are Cytoplasmic-facing. A helical membrane pass occupies residues 21 to 41 (NLLMYLGFGAIIATLVALYVL). The Periplasmic segment spans residues 42–171 (QMFQTSLDYT…FRHADPPGPW (130 aa)). A helical membrane pass occupies residues 172–192 (EQHSQLIIGMLLAAMLIYIVV). Over 193-700 (RRLSAAGSPM…ITAPATERSG (508 aa)) the chain is Cytoplasmic. ATP is bound at residue 262 to 269 (GPPGTGKT). A Zn(2+)-binding site is contributed by His-484. Glu-485 is a catalytic residue. 2 residues coordinate Zn(2+): His-488 and Asp-561.

In the central section; belongs to the AAA ATPase family. It in the C-terminal section; belongs to the peptidase M41 family. Homohexamer. The cofactor is Zn(2+).

The protein resides in the cell inner membrane. Functionally, acts as a processive, ATP-dependent zinc metallopeptidase for both cytoplasmic and membrane proteins. Plays a role in the quality control of integral membrane proteins. The polypeptide is ATP-dependent zinc metalloprotease FtsH (Pirellula staleyi (strain ATCC 27377 / DSM 6068 / ICPB 4128) (Pirella staleyi)).